A 943-amino-acid polypeptide reads, in one-letter code: Isoleucine--tRNA ligase (943 aa).

The 'HIGH' region signature appears at 59-69 (PYANGQIHLGH). E577 is a binding site for L-isoleucyl-5'-AMP. Positions 618 to 622 (KMSKS) match the 'KMSKS' region motif. K621 lines the ATP pocket. Residues C906, C909, C926, and C929 each contribute to the Zn(2+) site.

Belongs to the class-I aminoacyl-tRNA synthetase family. IleS type 1 subfamily. In terms of assembly, monomer. The cofactor is Zn(2+).

Its subcellular location is the cytoplasm. The catalysed reaction is tRNA(Ile) + L-isoleucine + ATP = L-isoleucyl-tRNA(Ile) + AMP + diphosphate. In terms of biological role, catalyzes the attachment of isoleucine to tRNA(Ile). As IleRS can inadvertently accommodate and process structurally similar amino acids such as valine, to avoid such errors it has two additional distinct tRNA(Ile)-dependent editing activities. One activity is designated as 'pretransfer' editing and involves the hydrolysis of activated Val-AMP. The other activity is designated 'posttransfer' editing and involves deacylation of mischarged Val-tRNA(Ile). In Xylella fastidiosa (strain M23), this protein is Isoleucine--tRNA ligase.